Here is a 396-residue protein sequence, read N- to C-terminus: Protein PIN-LIKES 5 (396 aa).

Residues Met-1–Ser-5 lie on the Lumenal side of the membrane. The chain crosses the membrane as a helical span at residues Leu-6 to Phe-26. Over Met-27 to Lys-45 the chain is Cytoplasmic. A helical transmembrane segment spans residues Val-46–Leu-66. The Lumenal segment spans residues Glu-67 to Trp-73. The chain crosses the membrane as a helical span at residues Phe-74–Val-94. The Cytoplasmic segment spans residues Lys-95–Leu-106. The chain crosses the membrane as a helical span at residues Ile-107–Ile-127. Residues Cys-128–Val-144 lie on the Lumenal side of the membrane. The helical transmembrane segment at Gly-145–Phe-165 threads the bilayer. The Cytoplasmic portion of the chain corresponds to Arg-166 to Glu-229. The helical transmembrane segment at Ile-230 to Ala-250 threads the bilayer. Topologically, residues Val-251 to Lys-273 are lumenal. The helical transmembrane segment at Leu-274–Gly-294 threads the bilayer. At Leu-295–Arg-312 the chain is on the cytoplasmic side. The helical transmembrane segment at Tyr-313–Leu-333 threads the bilayer. Topologically, residues Pro-334–Pro-337 are lumenal. Residues Leu-338–Met-358 form a helical membrane-spanning segment. The Cytoplasmic segment spans residues Thr-359–Ser-370. A helical transmembrane segment spans residues Val-371–Phe-391. Over Leu-392–Val-396 the chain is Lumenal.

It belongs to the auxin efflux carrier (TC 2.A.69.2) family. As to expression, expressed in seedlings, cauline leaves and flowers.

The protein resides in the endoplasmic reticulum membrane. Involved in cellular auxin homeostasis by regulating auxin metabolism. Regulates intracellular auxin accumulation at the endoplasmic reticulum and thus auxin availability for nuclear auxin signaling. This chain is Protein PIN-LIKES 5, found in Arabidopsis thaliana (Mouse-ear cress).